A 466-amino-acid chain; its full sequence is Asparagine--tRNA ligase (466 aa).

The protein belongs to the class-II aminoacyl-tRNA synthetase family. Homodimer.

Its subcellular location is the cytoplasm. It carries out the reaction tRNA(Asn) + L-asparagine + ATP = L-asparaginyl-tRNA(Asn) + AMP + diphosphate + H(+). The sequence is that of Asparagine--tRNA ligase from Shewanella sp. (strain ANA-3).